Here is a 277-residue protein sequence, read N- to C-terminus: uncharacterized protein (277 aa).

An N-terminal signal peptide occupies residues 1–25; sequence MNKKSIWSKTAFGSLFLLLGTAFTA. A lipid anchor (N-palmitoyl cysteine) is attached at C26. C26 carries S-diacylglycerol cysteine lipidation.

It belongs to the MG439/MG440 family.

The protein resides in the cell membrane. This is an uncharacterized protein from Mycoplasma pneumoniae (strain ATCC 29342 / M129 / Subtype 1) (Mycoplasmoides pneumoniae).